A 612-amino-acid chain; its full sequence is Dihydroxy-acid dehydratase (612 aa).

Asp-81 is a binding site for Mg(2+). [2Fe-2S] cluster is bound at residue Cys-122. Mg(2+) is bound by residues Asp-123 and Lys-124. Lys-124 is subject to N6-carboxylysine. Cys-195 contributes to the [2Fe-2S] cluster binding site. Residue Glu-491 participates in Mg(2+) binding. Catalysis depends on Ser-517, which acts as the Proton acceptor.

It belongs to the IlvD/Edd family. As to quaternary structure, homodimer. It depends on [2Fe-2S] cluster as a cofactor. Mg(2+) serves as cofactor.

The catalysed reaction is (2R)-2,3-dihydroxy-3-methylbutanoate = 3-methyl-2-oxobutanoate + H2O. The enzyme catalyses (2R,3R)-2,3-dihydroxy-3-methylpentanoate = (S)-3-methyl-2-oxopentanoate + H2O. It participates in amino-acid biosynthesis; L-isoleucine biosynthesis; L-isoleucine from 2-oxobutanoate: step 3/4. It functions in the pathway amino-acid biosynthesis; L-valine biosynthesis; L-valine from pyruvate: step 3/4. In terms of biological role, functions in the biosynthesis of branched-chain amino acids. Catalyzes the dehydration of (2R,3R)-2,3-dihydroxy-3-methylpentanoate (2,3-dihydroxy-3-methylvalerate) into 2-oxo-3-methylpentanoate (2-oxo-3-methylvalerate) and of (2R)-2,3-dihydroxy-3-methylbutanoate (2,3-dihydroxyisovalerate) into 2-oxo-3-methylbutanoate (2-oxoisovalerate), the penultimate precursor to L-isoleucine and L-valine, respectively. The sequence is that of Dihydroxy-acid dehydratase from Rhizobium johnstonii (strain DSM 114642 / LMG 32736 / 3841) (Rhizobium leguminosarum bv. viciae).